Reading from the N-terminus, the 113-residue chain is Large ribosomal subunit protein bL17 (113 aa).

Belongs to the bacterial ribosomal protein bL17 family. Part of the 50S ribosomal subunit. Contacts protein L32.

This chain is Large ribosomal subunit protein bL17, found in Alkaliphilus metalliredigens (strain QYMF).